Here is a 105-residue protein sequence, read N- to C-terminus: Small ribosomal subunit protein uS10 (105 aa).

The protein belongs to the universal ribosomal protein uS10 family. As to quaternary structure, part of the 30S ribosomal subunit.

In terms of biological role, involved in the binding of tRNA to the ribosomes. The polypeptide is Small ribosomal subunit protein uS10 (Agathobacter rectalis (strain ATCC 33656 / DSM 3377 / JCM 17463 / KCTC 5835 / VPI 0990) (Eubacterium rectale)).